We begin with the raw amino-acid sequence, 439 residues long: uncharacterized protein (439 aa).

The N-terminal stretch at 1 to 22 (MWVALKRFGFLSGLLALTVLSA) is a signal peptide. Residue cysteine 23 is the site of N-palmitoyl cysteine attachment. Cysteine 23 carries S-diacylglycerol cysteine lipidation.

It belongs to the MG067/MG068/MG395 family.

Its subcellular location is the cell membrane. This is an uncharacterized protein from Mycoplasma pneumoniae (strain ATCC 29342 / M129 / Subtype 1) (Mycoplasmoides pneumoniae).